A 462-amino-acid chain; its full sequence is MPKKARPAGDGKEQGPAPKQVKVEAACGPSSPLNFDSPSGLFESFISPIKTETFFKEFWEQKPLLIQRDDPALATYYQSLFRLSDLKSLCSWGIYYGRDVNVCRCVHGKKKVLNKDGRVHFLQLRQDFDQKRATIQFHQPQRFKDELWRIQEKLECYFGSLVGSNVYITPAGAQGLPPHYDDVEVFILQLEGEKHWRLYQPTVPLAREYSVEAEDRIGRPTHEFTLKPGDLLYFPRGTIHQADTPEGLAHSTHVTISTYQSSSWGDFLLDTISGLVFDTAKADVALRAGIPRQLLLQAESIAVATRLSGFLRMLADRLEGTKELPSADMKKDFAMNRLPPYYMGDRAKLVAPGGQLPGLDSTVRLQFRDHVVLTVGPYQDPSDETRGEMVYVYHSLRNRRDTHMMGNETESYGLRFPLSYMDALKQIWNSSAISVKDLKLTTDEEKQNLVLSLWTECLIQVV.

Residues 1-24 form a disordered region; the sequence is MPKKARPAGDGKEQGPAPKQVKVE. The JmjC domain occupies 139–271; sequence QPQRFKDELW…SSWGDFLLDT (133 aa). Positions 179, 181, and 240 each coordinate Fe cation. Position 308 is a phosphoserine (serine 308).

This sequence belongs to the ROX family. MINA53 subfamily. Fe(2+) is required as a cofactor.

It is found in the nucleus. It localises to the nucleolus. The enzyme catalyses L-histidyl-[ribosomal protein uL15] + 2-oxoglutarate + O2 = (3S)-3-hydroxy-L-histidyl-[ribosomal protein uL15] + succinate + CO2. It carries out the reaction L-histidyl-[protein] + 2-oxoglutarate + O2 = (3S)-3-hydroxy-L-histidyl-[protein] + succinate + CO2. Oxygenase that can act as both a histone lysine demethylase and a ribosomal histidine hydroxylase. Is involved in the demethylation of trimethylated 'Lys-9' on histone H3 (H3K9me3), leading to an increase in ribosomal RNA expression. Also catalyzes the hydroxylation of 60S ribosomal protein L27a on 'His-39'. May play an important role in cell growth and survival. May be involved in ribosome biogenesis, most likely during the assembly process of pre-ribosomal particles. The polypeptide is Ribosomal oxygenase 2 (RIOX2) (Bos taurus (Bovine)).